We begin with the raw amino-acid sequence, 220 residues long: Claudin-22 (220 aa).

At 1 to 10 (MGLVFRTATQ) the chain is on the cytoplasmic side. Residues 11 to 31 (AAALLLSLLGWVLSCLTNYLP) traverse the membrane as a helical segment. The Extracellular segment spans residues 32 to 81 (HWKNLNLELNEMENWTMGLWKSCVIQEEVGRQCKDFDSFLALPAELQVSR). A helical membrane pass occupies residues 82–102 (VLMSLCNGLGLLGLLASGCGL). The Cytoplasmic portion of the chain corresponds to 103–120 (DCLRLGETQEGLKKRLLT). Residues 121 to 141 (LGGTLLWTSGVMVLVPVSWVA) traverse the membrane as a helical segment. Topologically, residues 142–164 (HKTVREFWDETMPEIVPRWEFGE) are extracellular. The helical transmembrane segment at 165–185 (ALFLGWFAGFCLVLGGCVLHC) threads the bilayer. Topologically, residues 186–220 (AACWSPAPAASSHYAVAGPRDHQQHLELKQANPEI) are cytoplasmic.

This sequence belongs to the claudin family.

Its subcellular location is the cell junction. The protein resides in the tight junction. It is found in the cell membrane. Plays a major role in tight junction-specific obliteration of the intercellular space, through calcium-independent cell-adhesion activity. The protein is Claudin-22 (Cldn22) of Mus musculus (Mouse).